A 369-amino-acid chain; its full sequence is Protein-glutamate methylesterase/protein-glutamine glutaminase 1 (369 aa).

The region spanning 11 to 128 is the Response regulatory domain; the sequence is RVLIVDDSAA…DLERQEASIR (118 aa). D62 is subject to 4-aspartylphosphate. Positions 136–168 are disordered; it reads ATETTRRRSQPEPRPLAPGPKLTADEILPARPP. The 189-residue stretch at 170 to 358 folds into the CheB-type methylesterase domain; it reads PVPETMPVVC…LDRLAARIME (189 aa). Catalysis depends on residues S183, H209, and D305.

This sequence belongs to the CheB family. Phosphorylated by CheA. Phosphorylation of the N-terminal regulatory domain activates the methylesterase activity.

The protein localises to the cytoplasm. It catalyses the reaction [protein]-L-glutamate 5-O-methyl ester + H2O = L-glutamyl-[protein] + methanol + H(+). It carries out the reaction L-glutaminyl-[protein] + H2O = L-glutamyl-[protein] + NH4(+). Functionally, involved in chemotaxis. Part of a chemotaxis signal transduction system that modulates chemotaxis in response to various stimuli. Catalyzes the demethylation of specific methylglutamate residues introduced into the chemoreceptors (methyl-accepting chemotaxis proteins or MCP) by CheR. Also mediates the irreversible deamidation of specific glutamine residues to glutamic acid. In Cereibacter sphaeroides (strain ATCC 17023 / DSM 158 / JCM 6121 / CCUG 31486 / LMG 2827 / NBRC 12203 / NCIMB 8253 / ATH 2.4.1.) (Rhodobacter sphaeroides), this protein is Protein-glutamate methylesterase/protein-glutamine glutaminase 1.